Here is a 165-residue protein sequence, read N- to C-terminus: Acireductone dioxygenase (165 aa).

Fe(2+)-binding residues include His-90, His-92, Glu-96, and His-134. Ni(2+)-binding residues include His-90, His-92, Glu-96, and His-134.

The protein belongs to the acireductone dioxygenase (ARD) family. In terms of assembly, monomer. Fe(2+) is required as a cofactor. The cofactor is Ni(2+).

It carries out the reaction 1,2-dihydroxy-5-(methylsulfanyl)pent-1-en-3-one + O2 = 3-(methylsulfanyl)propanoate + CO + formate + 2 H(+). It catalyses the reaction 1,2-dihydroxy-5-(methylsulfanyl)pent-1-en-3-one + O2 = 4-methylsulfanyl-2-oxobutanoate + formate + 2 H(+). Its pathway is amino-acid biosynthesis; L-methionine biosynthesis via salvage pathway; L-methionine from S-methyl-5-thio-alpha-D-ribose 1-phosphate: step 5/6. In terms of biological role, catalyzes 2 different reactions between oxygen and the acireductone 1,2-dihydroxy-3-keto-5-methylthiopentene (DHK-MTPene) depending upon the metal bound in the active site. Fe-containing acireductone dioxygenase (Fe-ARD) produces formate and 2-keto-4-methylthiobutyrate (KMTB), the alpha-ketoacid precursor of methionine in the methionine recycle pathway. Ni-containing acireductone dioxygenase (Ni-ARD) produces methylthiopropionate, carbon monoxide and formate, and does not lie on the methionine recycle pathway. This chain is Acireductone dioxygenase, found in Rhodopseudomonas palustris (strain TIE-1).